Consider the following 451-residue polypeptide: uncharacterized protein (451 aa).

The first 18 residues, 1–18 (MRTRITLALAVLLLLLAG), serve as a signal peptide directing secretion. A lipid anchor (N-palmitoyl cysteine) is attached at Cys-19. A lipid anchor (S-diacylglycerol cysteine) is attached at Cys-19. Residues 424–451 (TSADPPPGVPRAGKRNIRDATSRLPSTP) are disordered.

The protein localises to the cell membrane. Its function is as follows. May participate in oleandomycin glycosylation and secretion during antibiotic production. This is an uncharacterized protein from Streptomyces antibioticus.